Consider the following 425-residue polypeptide: Putative dipeptidase MGYG_00085 (425 aa).

Residues 1–31 (MAPERRSRLSETAGLFVSLLALTSIVPVQAV) form the signal peptide. Zn(2+)-binding residues include H56, D58, and E168. C107 and C197 are disulfide-bonded. A substrate-binding site is contributed by H195. Residues H239 and H260 each coordinate Zn(2+). 2 residues coordinate substrate: R271 and D331. N403 is a glycosylation site (N-linked (GlcNAc...) asparagine).

Belongs to the metallo-dependent hydrolases superfamily. Peptidase M19 family. Requires Zn(2+) as cofactor.

It catalyses the reaction an L-aminoacyl-L-amino acid + H2O = 2 an L-alpha-amino acid. Its function is as follows. Hydrolyzes a wide range of dipeptides. The protein is Putative dipeptidase MGYG_00085 of Arthroderma gypseum (strain ATCC MYA-4604 / CBS 118893) (Microsporum gypseum).